We begin with the raw amino-acid sequence, 113 residues long: Hydrogenase maturation factor HypA (113 aa).

Position 2 (His2) interacts with Ni(2+). Cys73, Cys76, Cys89, and Cys92 together coordinate Zn(2+).

The protein belongs to the HypA/HybF family.

Its function is as follows. Involved in the maturation of [NiFe] hydrogenases. Required for nickel insertion into the metal center of the hydrogenase. This Cereibacter sphaeroides (strain KD131 / KCTC 12085) (Rhodobacter sphaeroides) protein is Hydrogenase maturation factor HypA.